The chain runs to 99 residues: PE family protein PE13 (99 aa).

The 93-residue stretch at 1 to 93 folds into the PE domain; the sequence is MSFVMAYPEM…ASSYAATEVA (93 aa).

It belongs to the mycobacterial PE family.

The protein resides in the secreted. Its subcellular location is the cell wall. May play a pivotal role in the interaction between M.tuberculosis and host. Can enhance the survival within macrophages under stress conditions such as H(2)O(2), SDS and low pH. Increases the production of IL-6 and IL-1beta from macrophages, and decreases the secretion of suppressor of cytokine signaling 3 (SOCS-3). These changes probably involve the p38-ERK-NF-kappa-B signaling pathway. Also precipitates the macrophage death. The sequence is that of PE family protein PE13 from Mycobacterium tuberculosis (strain ATCC 25618 / H37Rv).